The primary structure comprises 440 residues: Enolase 1 (440 aa).

Residues His-161 and Glu-170 each contribute to the substrate site. Glu-213 serves as the catalytic Proton donor. Residues Asp-248, Glu-297, and Asp-324 each contribute to the Mg(2+) site. The substrate site is built by Glu-297 and Asp-324. The Proton acceptor role is filled by Lys-349. Substrate-binding positions include 376–379 (SHRS) and Lys-400.

This sequence belongs to the enolase family. Homodimer. Requires Mg(2+) as cofactor.

Its subcellular location is the cytoplasm. The catalysed reaction is (2R)-2-phosphoglycerate = phosphoenolpyruvate + H2O. It participates in carbohydrate degradation; glycolysis; pyruvate from D-glyceraldehyde 3-phosphate: step 4/5. This is Enolase 1 (ENO1) from Candida albicans (strain SC5314 / ATCC MYA-2876) (Yeast).